A 356-amino-acid chain; its full sequence is S-adenosylmethionine:tRNA ribosyltransferase-isomerase (356 aa).

The protein belongs to the QueA family. In terms of assembly, monomer.

Its subcellular location is the cytoplasm. The enzyme catalyses 7-aminomethyl-7-carbaguanosine(34) in tRNA + S-adenosyl-L-methionine = epoxyqueuosine(34) in tRNA + adenine + L-methionine + 2 H(+). It functions in the pathway tRNA modification; tRNA-queuosine biosynthesis. In terms of biological role, transfers and isomerizes the ribose moiety from AdoMet to the 7-aminomethyl group of 7-deazaguanine (preQ1-tRNA) to give epoxyqueuosine (oQ-tRNA). This is S-adenosylmethionine:tRNA ribosyltransferase-isomerase from Escherichia fergusonii (strain ATCC 35469 / DSM 13698 / CCUG 18766 / IAM 14443 / JCM 21226 / LMG 7866 / NBRC 102419 / NCTC 12128 / CDC 0568-73).